Here is a 137-residue protein sequence, read N- to C-terminus: Nucleoside diphosphate kinase (137 aa).

Residues lysine 9, phenylalanine 57, arginine 85, threonine 91, arginine 102, and asparagine 112 each contribute to the ATP site. Histidine 115 acts as the Pros-phosphohistidine intermediate in catalysis.

Belongs to the NDK family. As to quaternary structure, homotetramer. The cofactor is Mg(2+).

The protein resides in the cytoplasm. It carries out the reaction a 2'-deoxyribonucleoside 5'-diphosphate + ATP = a 2'-deoxyribonucleoside 5'-triphosphate + ADP. The enzyme catalyses a ribonucleoside 5'-diphosphate + ATP = a ribonucleoside 5'-triphosphate + ADP. Its function is as follows. Major role in the synthesis of nucleoside triphosphates other than ATP. The ATP gamma phosphate is transferred to the NDP beta phosphate via a ping-pong mechanism, using a phosphorylated active-site intermediate. This is Nucleoside diphosphate kinase from Leptospira interrogans serogroup Icterohaemorrhagiae serovar Lai (strain 56601).